Here is a 180-residue protein sequence, read N- to C-terminus: uncharacterized protein (180 aa).

In terms of domain architecture, N-acetyltransferase spans Phe-45 to Asn-180.

The protein belongs to the acetyltransferase family. Ycf52 subfamily.

This is an uncharacterized protein from Prochlorococcus marinus (strain SARG / CCMP1375 / SS120).